Here is a 950-residue protein sequence, read N- to C-terminus: MORC family CW-type zinc finger protein 1 (950 aa).

Residues 281-342 (KGKFKTEVQK…TKHKSLRQKQ (62 aa)) adopt a coiled-coil conformation. The segment at 465 to 530 (SLESLQWRRR…SCNQIERLPS (66 aa)) adopts a CW-type zinc-finger fold. Cys485, Cys488, Cys511, and Cys522 together coordinate Zn(2+). Disordered stretches follow at residues 532-551 (PLGT…RQLQ) and 679-700 (KKQQ…ASSR). Positions 541-550 (PSKDERERQL) are enriched in basic and acidic residues. Positions 885 to 916 (LGQCELKRKRTEEKLSDLRAKLALLLQKLQLG) form a coiled coil.

Expressed at very low level in male germ cells.

It localises to the nucleus. Its function is as follows. Required for spermatogenesis. Essential for de novo DNA methylation and silencing of transposable elements in the male embryonic germ cells. Not required for piRNA biosynthesis. This chain is MORC family CW-type zinc finger protein 1, found in Mus musculus (Mouse).